The following is a 1534-amino-acid chain: ABC transporter G family member 6 (1534 aa).

The segment covering 1-11 (MAKQDPKDKNS) has biased composition (basic and acidic residues). A disordered region spans residues 1–85 (MAKQDPKDKN…ESNYDSDDEK (85 aa)). A compositionally biased stretch (low complexity) spans 21 to 65 (NNNNNENLDNDQELLNNNNNNNNNNNNNNNNNNNNNNNNNNNNNL). In terms of domain architecture, ABC transporter 1 spans 138–385 (VYCRNATYTV…FKKLGFACPS (248 aa)). 177–184 (GTPGCGKS) contributes to the ATP binding site. The ABC transmembrane type-2 1 domain maps to 481–757 (RRNYYNFLTR…VVCFFALKYF (277 aa)). 7 helical membrane passes run 486–506 (NFLT…TLYW), 521–541 (LLFF…NSFF), 566–586 (IICD…IVYW), 592–612 (PVFI…NLSL), 625–645 (IEIA…FSGF), 652–672 (IGGW…FQGL), and 734–754 (VVFG…FFAL). The interval 781 to 907 (KQDEESAAIS…KSKNGKDIGS (127 aa)) is disordered. The segment covering 797–808 (IDDDNDDDADYE) has biased composition (acidic residues). The segment covering 830–841 (SPSSLTTGSPYY) has biased composition (polar residues). The span at 842–856 (NINNNNNNLSGSGNN) shows a compositional bias: low complexity. A compositionally biased stretch (polar residues) spans 864–873 (TPSNLSPSVN). Low complexity predominate over residues 874 to 896 (SPITINSPMPTSPSNNNNNNNSN). A compositionally biased stretch (basic and acidic residues) spans 897-906 (EKSKNGKDIG). The region spanning 924 to 1166 (VKVDDPDNPK…VILDYCDKLG (243 aa)) is the ABC transporter 2 domain. 960–967 (GPSGAGKS) provides a ligand contact to ATP. An ABC transmembrane type-2 2 domain is found at 1256 to 1529 (LRRPAIFVSN…GLSFWGFKKI (274 aa)). The next 6 membrane-spanning stretches (helical) occupy residues 1261–1281 (IFVS…TLFV), 1296–1316 (LLFF…PTTV), 1345–1365 (YPFT…IAGL), 1377–1397 (CLFI…CLAV), 1404–1424 (MAST…GFVI), and 1506–1526 (IDIA…FWGF).

This sequence belongs to the ABC transporter superfamily. ABCG family. PDR (TC 3.A.1.205) subfamily.

The protein resides in the membrane. The chain is ABC transporter G family member 6 (abcG6) from Dictyostelium discoideum (Social amoeba).